The primary structure comprises 345 residues: Phosphoribosylformylglycinamidine cyclo-ligase (345 aa).

Belongs to the AIR synthase family.

Its subcellular location is the cytoplasm. The enzyme catalyses 2-formamido-N(1)-(5-O-phospho-beta-D-ribosyl)acetamidine + ATP = 5-amino-1-(5-phospho-beta-D-ribosyl)imidazole + ADP + phosphate + H(+). It participates in purine metabolism; IMP biosynthesis via de novo pathway; 5-amino-1-(5-phospho-D-ribosyl)imidazole from N(2)-formyl-N(1)-(5-phospho-D-ribosyl)glycinamide: step 2/2. The sequence is that of Phosphoribosylformylglycinamidine cyclo-ligase from Myxococcus xanthus (strain DK1622).